Reading from the N-terminus, the 276-residue chain is MAIKKYKPTSAGRRGMSTLDFAEITTDKPEKSLLAPLHKKGGRNNQGKMTVRHQGGGHKRQYRIIDFKRNKDGIPGRVATIEYDPNRSANIALINYVDGEKRYILAPKGLKVGMTIESGPEADIKVGNALPLKNIPVGTVIHNIELKPGKGGQLVRSAGAEAQLLGKEGDYVLVRLNSGETRYILATCRATIGQVGNLEHELVNIGKAGRSRWLGKRPTVRGSAMNPNDHPHGGGEGRAPIGRKSPMSPWGKPTLGYKTRKKNKASDKYIVRRRKK.

Disordered stretches follow at residues 36–58 (PLHK…GGGH) and 214–276 (LGKR…RRKK).

The protein belongs to the universal ribosomal protein uL2 family. As to quaternary structure, part of the 50S ribosomal subunit. Forms a bridge to the 30S subunit in the 70S ribosome.

Functionally, one of the primary rRNA binding proteins. Required for association of the 30S and 50S subunits to form the 70S ribosome, for tRNA binding and peptide bond formation. It has been suggested to have peptidyltransferase activity; this is somewhat controversial. Makes several contacts with the 16S rRNA in the 70S ribosome. This is Large ribosomal subunit protein uL2 from Halalkalibacterium halodurans (strain ATCC BAA-125 / DSM 18197 / FERM 7344 / JCM 9153 / C-125) (Bacillus halodurans).